The primary structure comprises 351 residues: Glycerol-3-phosphate dehydrogenase 1-like protein (351 aa).

Gly-12–Gly-17 is a binding site for NAD(+). Substrate is bound at residue Lys-122. An NAD(+)-binding site is contributed by Ala-155. Catalysis depends on Lys-206, which acts as the Proton acceptor. Residues Arg-271, Lys-298, and Gln-300 each coordinate NAD(+). Residue Arg-271–Asn-272 coordinates substrate.

Belongs to the NAD-dependent glycerol-3-phosphate dehydrogenase family. Interacts with SCN5A.

It localises to the cytoplasm. It catalyses the reaction sn-glycerol 3-phosphate + NAD(+) = dihydroxyacetone phosphate + NADH + H(+). In terms of biological role, plays a role in regulating cardiac sodium current; decreased enzymatic activity with resulting increased levels of glycerol 3-phosphate activating the DPD1L-dependent SCN5A phosphorylation pathway, may ultimately lead to decreased sodium current; cardiac sodium current may also be reduced due to alterations of NAD(H) balance induced by DPD1L. In Mus musculus (Mouse), this protein is Glycerol-3-phosphate dehydrogenase 1-like protein (Gpd1l).